Reading from the N-terminus, the 285-residue chain is Type II restriction enzyme Cfr10I (285 aa).

Mg(2+) contacts are provided by D134 and E204.

As to quaternary structure, homodimer. It depends on Mg(2+) as a cofactor.

The enzyme catalyses Endonucleolytic cleavage of DNA to give specific double-stranded fragments with terminal 5'-phosphates.. In terms of biological role, an F and P subtype restriction enzyme that recognizes the double-stranded sequence 5'-RCCGGY-3' and cleaves after R-1. This chain is Type II restriction enzyme Cfr10I (cfr10IR), found in Citrobacter freundii.